Consider the following 356-residue polypeptide: 5-formaminoimidazole-4-carboxamide-1-(beta)-D-ribofuranosyl 5'-monophosphate synthetase (356 aa).

5-amino-1-(5-phospho-beta-D-ribosyl)imidazole-4-carboxamide contacts are provided by His27 and Ser94. The 233-residue stretch at 101 to 333 folds into the ATP-grasp domain; sequence TENFAELTVP…YADLIQEDLS (233 aa). ATP is bound by residues 145 to 196 and Glu226; that span reads PRDI…TRYY. A 5-amino-1-(5-phospho-beta-D-ribosyl)imidazole-4-carboxamide-binding site is contributed by Asn255. Glu293 and Glu306 together coordinate Mg(2+).

The protein belongs to the phosphohexose mutase family. Mg(2+) serves as cofactor. Mn(2+) is required as a cofactor.

It catalyses the reaction 5-amino-1-(5-phospho-beta-D-ribosyl)imidazole-4-carboxamide + formate + ATP = 5-formamido-1-(5-phospho-D-ribosyl)imidazole-4-carboxamide + ADP + phosphate. Its pathway is purine metabolism; IMP biosynthesis via de novo pathway; 5-formamido-1-(5-phospho-D-ribosyl)imidazole-4-carboxamide from 5-amino-1-(5-phospho-D-ribosyl)imidazole-4-carboxamide (formate route): step 1/1. In terms of biological role, catalyzes the ATP- and formate-dependent formylation of 5-aminoimidazole-4-carboxamide-1-beta-d-ribofuranosyl 5'-monophosphate (AICAR) to 5-formaminoimidazole-4-carboxamide-1-beta-d-ribofuranosyl 5'-monophosphate (FAICAR) in the absence of folates. The polypeptide is 5-formaminoimidazole-4-carboxamide-1-(beta)-D-ribofuranosyl 5'-monophosphate synthetase (Methanosarcina acetivorans (strain ATCC 35395 / DSM 2834 / JCM 12185 / C2A)).